The sequence spans 2210 residues: Orsellinic acid synthase ArmB (2210 aa).

The tract at residues 38-261 is N-terminal acylcarrier protein transacylase domain (SAT); it reads LLLDACHYAF…HKTTVDALYH (224 aa). In terms of domain architecture, Ketosynthase family 3 (KS3) spans 391-817; sequence QEPIAICGMS…GSNGALLLEE (427 aa). Active-site for beta-ketoacyl synthase activity residues include Cys-561, His-696, and His-736. The segment at 915–1240 is malonyl-CoA:ACP transacylase (MAT) domain; sequence VFVFSGQGGQ…GLTLSSSLSQ (326 aa). The active-site For acyl/malonyl transferase activity is the Ser-1009. Positions 1307–1437 are N-terminal hotdog fold; it reads MLQSWAQFPS…GQFRPLLVVD (131 aa). The PKS/mFAS DH domain maps to 1307 to 1614; it reads MLQSWAQFPS…FKKLRLNTLQ (308 aa). Positions 1336–1611 are product template (PT) domain; that stretch reads ITGHIVGDVP…GMCFKKLRLN (276 aa). The Proton acceptor; for dehydratase activity role is filled by His-1339. The C-terminal hotdog fold stretch occupies residues 1464 to 1614; that stretch reads AEVFTTRTAY…FKKLRLNTLQ (151 aa). The active-site Proton donor; for dehydratase activity is the Asp-1525. The Carrier 1 domain occupies 1660–1735; that stretch reads VDVQNTVLNI…ELVREISSTV (76 aa). O-(pantetheine 4'-phosphoryl)serine is present on Ser-1694. Positions 1739–1761 are disordered; sequence AATAVNTPETASTPEPTLQGDAS. The 78-residue stretch at 1845–1922 folds into the Carrier 2 domain; it reads SSPSSDLVDT…AVNQYISSKR (78 aa). Ser-1882 carries the post-translational modification O-(pantetheine 4'-phosphoryl)serine. Positions 1920–1946 are disordered; sequence SKRPGKSPKQVEETAMDPDREEDLSDL. A compositionally biased stretch (acidic residues) spans 1933 to 1944; the sequence is TAMDPDREEDLS. The thioesterase (TE) domain stretch occupies residues 1963-2202; sequence VPMSVQKSSS…LGAVTQALVD (240 aa).

It functions in the pathway secondary metabolite biosynthesis. Non-reducing polyketide synthase, part of the gene cluster that mediates the biosynthesis of melleolides, a range of antifungal and phytotoxic polyketide derivatives composed of an orsellinic acid (OA) moiety esterified to various sesquiterpene alcohols. The first step in melleolides biosynthesis is performed by the delta(6)-protoilludene synthase PRO1 which catalyzes the cyclization of farnesyl diphosphate to protoilludene. The orsellinic acid synthase armB produces OA by condensing acetyl-CoA with 3 malonyl-CoA units in a three-round chain elongation reaction folowed by a C2-C7 ring closure. ArmB further catalyzes the trans-esterification of OA to the various sesquiterpene alcohols resulting from the hydroxylation of protoilludene. The melleolides cluster also includes 5 cytochrome P450 monooxygenases, 4 NAD(+)-dependent oxidoreductases, one flavin-dependent oxidoreductase, and one O-methyltransferase. The cytochrome P450 monooxygenases may be involved in protoilludene hydroxylation to elaborate melleolides with multiple alcohol groups, such as melleolide D, which carries alcohol functionalities at C-4, C-5, C-10, and C-13. The role of the NAD(+)-dependent enzymes remains unknown. Numerous melleolides, including arnamial, show 5'-O-methylation of the aromatic moiety which may be catalyzed by the methyltransferase encoded in the cluster. The flavin-dependent oxidoreductase might represent the dehydrogenase yielding the aldehyde in position 1 of arnamial and other melleolides. Finally, several halogenase localized outside of the cluster (armH1 to armH5), are able to catalyze the transfer of a single chlorine atom to the melleolide backbone, resulting in a 6'-chloromelleolide product. This chain is Orsellinic acid synthase ArmB, found in Armillaria ostoyae (Armillaria root rot fungus).